Reading from the N-terminus, the 442-residue chain is MTSIKEQAAISRLLSFLQDWDNAGKVARSNILNNFIEANQGKTAPELEQEFSQGASLFLVRLTTWLRLTYMTGSPLDKLLRSIGVFLSAVSSNRYLIEFLEVGGVLTLLEILALNKIKEEDKKESIKLLQVIANSGRKYKELICESYGVRSIAEFLAKSKSEETQEEVQVLLDSLIHGNPKYQNQVYKGLIALLPCASPKAQQLALQTLRTAQSIIGTTHPSIVDCVLKVLCTMHLEVQYEAIELIKDLVNYDVCPALLKGLVALLIPSFKETSKLQSQIVSDSSVLELTAHLPLFLQQAAAAKAIGVLARHNTTLAEEMLHLRVIHSLMAAMGNTDHSNSQRQASLTLEYFVQLFPVVEEHVRKTMGEELYKLFLSNAENLYMNIDSIQADILAANKVNVTRVLHLSGLSYSNMSFYFGHPNEDQVAYVTHFRKEDVEEKE.

This is Armadillo-like helical domain containing protein 1 from Bos taurus (Bovine).